The chain runs to 444 residues: Enolase 2 (444 aa).

Substrate is bound by residues His-165 and Glu-174. The Proton donor role is filled by Glu-217. 3 residues coordinate Mg(2+): Asp-252, Glu-303, and Asp-330. Substrate is bound by residues Glu-303 and Asp-330. The active-site Proton acceptor is Lys-355. Residues 382–385 (SHRS) and Lys-406 contribute to the substrate site.

Belongs to the enolase family. In terms of assembly, homodimer. Requires Mg(2+) as cofactor.

The protein localises to the cytoplasm. It catalyses the reaction (2R)-2-phosphoglycerate = phosphoenolpyruvate + H2O. Its pathway is carbohydrate degradation; glycolysis; pyruvate from D-glyceraldehyde 3-phosphate: step 4/5. This is Enolase 2 (ENO2) from Toxoplasma gondii.